The following is a 264-amino-acid chain: Dehydrodolichyl diphosphate synthase complex subunit SPAC4D7.04c (264 aa).

This sequence belongs to the UPP synthase family. As to quaternary structure, forms an active dehydrodolichyl diphosphate synthase complex with nus1. Requires Mg(2+) as cofactor.

The protein localises to the endoplasmic reticulum membrane. The enzyme catalyses n isopentenyl diphosphate + (2E,6E)-farnesyl diphosphate = a di-trans,poly-cis-polyprenyl diphosphate + n diphosphate. The protein operates within protein modification; protein glycosylation. Functionally, with nus1, forms the dehydrodolichyl diphosphate synthase (DDS) complex, an essential component of the dolichol monophosphate (Dol-P) biosynthetic machinery. Adds multiple copies of isopentenyl pyrophosphate (IPP) to farnesyl pyrophosphate (FPP) to produce dehydrodolichyl diphosphate (Dedol-PP), a precursor of dolichol which is utilized as a sugar carrier in protein glycosylation in the endoplasmic reticulum (ER). The sequence is that of Dehydrodolichyl diphosphate synthase complex subunit SPAC4D7.04c from Schizosaccharomyces pombe (strain 972 / ATCC 24843) (Fission yeast).